The chain runs to 403 residues: Ubiquitin-like modifier-activating enzyme 5 (403 aa).

ATP is bound by residues Gly81, Asp102, Lys125, Asn148, and Asn182. Zn(2+)-binding residues include Cys224 and Cys227. Cys248 acts as the Glycyl thioester intermediate in catalysis. Zn(2+) contacts are provided by Cys301 and Cys306. A UFM1-interacting sequence (UIS) motif is present at residues Val333–Val345. Residues Ser346–Lys376 form a linker region. Residues Ser357 and Ser392 each carry the phosphoserine modification. The short motif at Asp388–Met403 is the UFC1-binding sequence (UFC) element.

The protein belongs to the ubiquitin-activating E1 family. UBA5 subfamily. Homodimer; homodimerization is required for UFM1 activation. Interacts (via UIS motif) with UFM1; binds UFM1 via a trans-binding mechanism in which UFM1 interacts with distinct sites in both subunits of the UBA5 homodimer. Interacts (via C-terminus) with UFC1. Interacts (via UIS motif) with GABARAPL2 and, with lower affinity, with GABARAP and GABARAPL1.

Its subcellular location is the cytoplasm. The protein resides in the nucleus. It localises to the endoplasmic reticulum membrane. The protein localises to the golgi apparatus. Its function is as follows. E1-like enzyme which specifically catalyzes the first step in ufmylation. Activates UFM1 by first adenylating its C-terminal glycine residue with ATP, and thereafter linking this residue to the side chain of a cysteine residue in E1, yielding a UFM1-E1 thioester and free AMP. Activates UFM1 via a trans-binding mechanism, in which UFM1 interacts with distinct sites in both subunits of the UBA5 homodimer. Trans-binding also promotes stabilization of the UBA5 homodimer, and enhances ATP-binding. Transfer of UFM1 from UBA5 to the E2-like enzyme UFC1 also takes place using a trans mechanism. Ufmylation plays a key role in various processes, such as ribosome recycling, response to DNA damage, interferon response or reticulophagy (also called ER-phagy). Ufmylation is essential for erythroid differentiation of both megakaryocytes and erythrocytes. In Mus musculus (Mouse), this protein is Ubiquitin-like modifier-activating enzyme 5.